Consider the following 122-residue polypeptide: Large ribosomal subunit protein bL17 (122 aa).

It belongs to the bacterial ribosomal protein bL17 family. As to quaternary structure, part of the 50S ribosomal subunit. Contacts protein L32.

The polypeptide is Large ribosomal subunit protein bL17 (Staphylococcus aureus (strain Mu3 / ATCC 700698)).